The primary structure comprises 127 residues: Modulator protein MzrA (127 aa).

Topologically, residues 1-10 (MVISPLALRR) are cytoplasmic. Residues 11–31 (LSYGLIALVLLSALILVWTAL) form a helical membrane-spanning segment. Residues 32–127 (QRQESTLAIR…RLRDTSHRFG (96 aa)) lie on the Periplasmic side of the membrane.

It belongs to the MzrA family. Interacts with EnvZ.

It is found in the cell inner membrane. In terms of biological role, modulates the activity of the EnvZ/OmpR two-component regulatory system, probably by directly modulating EnvZ enzymatic activity and increasing stability of phosphorylated OmpR. This is Modulator protein MzrA from Enterobacter sp. (strain 638).